We begin with the raw amino-acid sequence, 244 residues long: Lymphotoxin-beta (244 aa).

At 1-18 the chain is on the cytoplasmic side; sequence MGALGLEGRGGRLQGRGS. The helical; Signal-anchor for type II membrane protein transmembrane segment at 19–48 threads the bilayer; sequence LLLAVAGATSLVTLLLAVPITVLAVLALVP. Residues 49–244 are Extracellular-facing; the sequence is QDQGGLVTDT…KTFFGAVMVG (196 aa). The region spanning 88–243 is the THD domain; the sequence is PAAHLIGAPL…GKTFFGAVMV (156 aa). N-linked (GlcNAc...) asparagine glycosylation occurs at Asn-222.

It belongs to the tumor necrosis factor family. Heterotrimer of either two LTB and one LTA subunits or (less prevalent) two LTA and one LTB subunits.

It localises to the membrane. In terms of biological role, cytokine that binds to LTBR/TNFRSF3. May play a specific role in immune response regulation. Provides the membrane anchor for the attachment of the heterotrimeric complex to the cell surface. The sequence is that of Lymphotoxin-beta (LTB) from Macaca mulatta (Rhesus macaque).